The following is a 77-amino-acid chain: RNA-binding protein Hfq (77 aa).

Positions 10-70 constitute a Sm domain; it reads DAFLNHVRKT…ISTVMPAQPI (61 aa).

The protein belongs to the Hfq family. As to quaternary structure, homohexamer.

Functionally, RNA chaperone that binds small regulatory RNA (sRNAs) and mRNAs to facilitate mRNA translational regulation in response to envelope stress, environmental stress and changes in metabolite concentrations. Also binds with high specificity to tRNAs. The polypeptide is RNA-binding protein Hfq (Jannaschia sp. (strain CCS1)).